We begin with the raw amino-acid sequence, 68 residues long: Preprofallaxidin-5 (68 aa).

Residues 1–22 (MASLKKSLFLVLFLGFVSLSIC) form the signal peptide. A propeptide spanning residues 23 to 51 (EEEKREDKEDEGENEEAEENHEERSEEKR) is cleaved from the precursor. Residues 24-50 (EEKREDKEDEGENEEAEENHEERSEEK) are disordered. Residues 30-42 (KEDEGENEEAEEN) show a composition bias toward acidic residues. Leucine amide is present on Leu64. Ser68 is a propeptide.

It belongs to the frog skin active peptide (FSAP) family. Brevinin subfamily. Expressed by the skin glands.

The protein localises to the secreted. This Litoria fallax (Eastern dwarf tree frog) protein is Preprofallaxidin-5.